Reading from the N-terminus, the 158-residue chain is Large ribosomal subunit protein uL15 (158 aa).

The segment covering 1 to 13 (MKLNEIKDNEGST) has biased composition (basic and acidic residues). Positions 1–44 (MKLNEIKDNEGSTHSRKRLGRGIGSGSGKTAGRGVKGQKSRSGV) are disordered. Positions 21–35 (RGIGSGSGKTAGRGV) are enriched in gly residues.

Belongs to the universal ribosomal protein uL15 family. Part of the 50S ribosomal subunit.

Its function is as follows. Binds to the 23S rRNA. The chain is Large ribosomal subunit protein uL15 from Rhizobium etli (strain ATCC 51251 / DSM 11541 / JCM 21823 / NBRC 15573 / CFN 42).